We begin with the raw amino-acid sequence, 227 residues long: Ribose-5-phosphate isomerase A (227 aa).

Substrate is bound by residues 26 to 29 (TGST), 82 to 85 (DGAD), and 95 to 98 (KGGG). The active-site Proton acceptor is the E104. Substrate is bound at residue K122.

The protein belongs to the ribose 5-phosphate isomerase family. As to quaternary structure, homodimer.

It catalyses the reaction aldehydo-D-ribose 5-phosphate = D-ribulose 5-phosphate. Its pathway is carbohydrate degradation; pentose phosphate pathway; D-ribose 5-phosphate from D-ribulose 5-phosphate (non-oxidative stage): step 1/1. In terms of biological role, catalyzes the reversible conversion of ribose-5-phosphate to ribulose 5-phosphate. This is Ribose-5-phosphate isomerase A from Streptococcus pyogenes serotype M1.